A 918-amino-acid chain; its full sequence is Probable lipoxygenase 6 (918 aa).

Residues 56 to 76 (AASPSSGIKGGGAGERRPAPE) form a disordered region. Residues 90 to 218 (QKEDIKEAVA…ELPTKRVFFS (129 aa)) form the PLAT domain. The 698-residue stretch at 221 to 918 (PYLPSETPPG…CRGVPNSISI (698 aa)) folds into the Lipoxygenase domain. 5 residues coordinate Fe cation: H573, H578, H765, N769, and I918.

Belongs to the lipoxygenase family. The cofactor is Fe cation.

The enzyme catalyses (9Z,12Z)-octadecadienoate + O2 = (13S)-hydroperoxy-(9Z,11E)-octadecadienoate. The catalysed reaction is (9Z,12Z,15Z)-octadecatrienoate + O2 = (13S)-hydroperoxy-(9Z,11E,15Z)-octadecatrienoate. Its pathway is lipid metabolism; oxylipin biosynthesis. In terms of biological role, plant lipoxygenase may be involved in a number of diverse aspects of plant physiology including growth and development, pest resistance, and senescence or responses to wounding. Catalyzes the hydroperoxidation of lipids containing a cis,cis-1,4-pentadiene structure. The polypeptide is Probable lipoxygenase 6 (Oryza sativa subsp. japonica (Rice)).